Here is a 345-residue protein sequence, read N- to C-terminus: Nicotinate-nucleotide--dimethylbenzimidazole phosphoribosyltransferase (345 aa).

E312 functions as the Proton acceptor in the catalytic mechanism.

The protein belongs to the CobT family.

The catalysed reaction is 5,6-dimethylbenzimidazole + nicotinate beta-D-ribonucleotide = alpha-ribazole 5'-phosphate + nicotinate + H(+). Its pathway is nucleoside biosynthesis; alpha-ribazole biosynthesis; alpha-ribazole from 5,6-dimethylbenzimidazole: step 1/2. Catalyzes the synthesis of alpha-ribazole-5'-phosphate from nicotinate mononucleotide (NAMN) and 5,6-dimethylbenzimidazole (DMB). This chain is Nicotinate-nucleotide--dimethylbenzimidazole phosphoribosyltransferase, found in Bacteroides fragilis (strain YCH46).